The chain runs to 394 residues: MASASLLKTSPVLDNPEFLKGQTLRIPSVAGVRFTPSGSSSLTVRASSYADELVKTAKTVASPGRGILAMDESNATCGKRLASIGLENTEANRQAYRTLLISAPGLGQYVSGAILFEETLYQSTTDGKKMVDVLIEQGIVPGIKVDKGWLPLPGSNDESWCQGLDGLACRSAAYYQQGARFAKWRTVVSIPNGPSALAVKEAAWGLARYAAITQDNGLDPILEPEIMLDGEHGIDRTFRVAQQVWAEVFFNLAENNVLLEGSSLKPSMVGPGALSARKGPPEQVADYPLKLLHRRRGPVVPGIMVLSGGQSEVEATLNLNAMNQSPNPWHVSFSYARALQNTCLKTWVEGQENVKAQDFACAKSNSLAQLGKYTGEGESEERKKDMFVKATLTY.

The N-terminal 46 residues, 1–46, are a transit peptide targeting the chloroplast; that stretch reads MASASLLKTSPVLDNPEFLKGQTLRIPSVAGVRFTPSGSSSLTVRA. Residues Arg-93 and Lys-183 each coordinate substrate. Glu-223 serves as the catalytic Proton acceptor. The active-site Schiff-base intermediate with dihydroxyacetone-P is the Lys-265.

It belongs to the class I fructose-bisphosphate aldolase family.

The protein resides in the plastid. It is found in the chloroplast. The enzyme catalyses beta-D-fructose 1,6-bisphosphate = D-glyceraldehyde 3-phosphate + dihydroxyacetone phosphate. Its pathway is carbohydrate degradation; glycolysis; D-glyceraldehyde 3-phosphate and glycerone phosphate from D-glucose: step 4/4. This is Fructose-bisphosphate aldolase, chloroplastic from Spinacia oleracea (Spinach).